The chain runs to 800 residues: Transducin beta-like protein 3 (800 aa).

Alanine 2 is subject to N-acetylalanine. WD repeat units lie at residues 64-105, 107-146, 149-190, 193-232, 245-284, 290-329, 332-372, 374-413, 419-459, 477-516, 519-560, 562-602, and 604-642; these read EDQE…RLWK, IHTAPVATMAFDPTSTLLATGGCDGAVRVWDVVRCYGTHH, GSPG…CLAV, AHYSAVTSLTFSADGHTMLSSGRDKICVIWDLRSLQATRT, LPEEPAPELGVKSAGLHFLTAGDQGALRVWEAASGRCVHA, GPGRELTHCTLAHAAGLLLSVTADHNLLLYDARSLRLRKQ, GYSE…CQIL, GHTDIVLALDVFRKGRLFASCAKDQSIRVWRMNKSGEVAC, GHTH…LSKG, CHDKDINSVAVAPNDKLLATGSQDRTAKLWALPRCQLLGT, GHRR…KTFE, HDAS…RTLD, and HEDKVWGLHCSRLDDRALTGASDSRVVLWKDVTEAEQAE. At serine 257 the chain carries Phosphoserine. A Glycyl lysine isopeptide (Lys-Gly) (interchain with G-Cter in SUMO2) cross-link involves residue lysine 407.

As to quaternary structure, part of the small subunit (SSU) processome, composed of more than 70 proteins and the RNA chaperone small nucleolar RNA (snoRNA) U3.

It is found in the nucleus. The protein resides in the nucleolus. Part of the small subunit (SSU) processome, first precursor of the small eukaryotic ribosomal subunit. During the assembly of the SSU processome in the nucleolus, many ribosome biogenesis factors, an RNA chaperone and ribosomal proteins associate with the nascent pre-rRNA and work in concert to generate RNA folding, modifications, rearrangements and cleavage as well as targeted degradation of pre-ribosomal RNA by the RNA exosome. The protein is Transducin beta-like protein 3 (TBL3) of Bos taurus (Bovine).